We begin with the raw amino-acid sequence, 637 residues long: SCF-associated factor 1 (637 aa).

The 50-residue stretch at 14–63 (GLSPDIVQATLPFLSSDDIKNLSQTNKYYNTLLDFDHSKILWHELFHKAF) folds into the F-box domain. A Phosphoserine modification is found at Ser16. The RCC1 1 repeat unit spans residues 109-202 (AKFYSWGYLK…GFSFQILTES (94 aa)). Residues 242–315 (YPRITSRSNG…RTTMPSMGPH (74 aa)) are disordered. A compositionally biased stretch (polar residues) spans 244–260 (RITSRSNGSTVNTTGTF). The residue at position 266 (Ser266) is a Phosphoserine. A compositionally biased stretch (low complexity) spans 289–305 (SGGAPAASPGGSHSGVP). An RCC1 2 repeat occupies 565-635 (GHLYSWGIES…GWQTGALIIK (71 aa)).

Interacts with AAH1, SKP1 and CDC53. Component of the SCF(SAF1) complex containing CDC53, SKP1, HRT1 and SAF1.

The protein operates within protein modification; protein ubiquitination. Functionally, substrate recognition component of a SCF (SKP1-CUL1-F-box protein) E3 ubiquitin-protein ligase complex which mediates the ubiquitination and subsequent proteasomal degradation of target proteins. Targets AAH1 adenine deaminase for proteasome-dependent degradation upon entry into quiescence. Targets also URA7. This Saccharomyces cerevisiae (strain ATCC 204508 / S288c) (Baker's yeast) protein is SCF-associated factor 1 (SAF1).